A 233-amino-acid chain; its full sequence is tRNA (guanine-N(7)-)-methyltransferase (233 aa).

S-adenosyl-L-methionine-binding residues include E62, E87, D114, and D136. D136 is a catalytic residue. Residues K140, D172, and 211–214 (TRYE) contribute to the substrate site.

Belongs to the class I-like SAM-binding methyltransferase superfamily. TrmB family.

The catalysed reaction is guanosine(46) in tRNA + S-adenosyl-L-methionine = N(7)-methylguanosine(46) in tRNA + S-adenosyl-L-homocysteine. Its pathway is tRNA modification; N(7)-methylguanine-tRNA biosynthesis. Its function is as follows. Catalyzes the formation of N(7)-methylguanine at position 46 (m7G46) in tRNA. The chain is tRNA (guanine-N(7)-)-methyltransferase from Erythrobacter litoralis (strain HTCC2594).